The sequence spans 80 residues: Phycocyanin-645 alpha-1 chain (80 aa).

Residue Arg16 participates in (2R,3E)-phycocyanobilin binding. 4 residues coordinate mesobiliverdin: Cys18, Gln24, Tyr25, and Lys40. Pro71 and Ile73 together coordinate 15,16-dihydrobiliverdin.

This sequence belongs to the phycoerythrin family. In terms of assembly, heterotetramer of 2 different alpha chains and 2 identical beta chains which form 2 alpha-beta heterodimers within the heterotetramer. Post-translationally, contains one phycocyanobilin chromophore, one mesobiliverdin chromophore and one 15,16-dihydrobiliverdin chromophore with binding mediated by both the alpha and beta subunits.

It is found in the plastid. The protein resides in the chloroplast thylakoid membrane. Light-harvesting photosynthetic tetrapyrrole chromophore-protein from the phycobiliprotein complex. The protein is Phycocyanin-645 alpha-1 chain of Chroomonas sp.